The chain runs to 124 residues: Large ribosomal subunit protein uL14 (124 aa).

Belongs to the universal ribosomal protein uL14 family. Part of the 50S ribosomal subunit. Forms a cluster with proteins L3 and L19. In the 70S ribosome, L14 and L19 interact and together make contacts with the 16S rRNA in bridges B5 and B8.

In terms of biological role, binds to 23S rRNA. Forms part of two intersubunit bridges in the 70S ribosome. In Clostridium novyi (strain NT), this protein is Large ribosomal subunit protein uL14.